The primary structure comprises 78 residues: Conotoxin TsMEKL-P012 (78 aa).

The first 19 residues, 1–19 (MEKLTILLLLAAVLVLAQA), serve as a signal peptide directing secretion. Residues 20–38 (LIKKGGGEKRQKEKINFLS) constitute a propeptide that is removed on maturation. Disulfide bonds link C52/C66, C59/C70, and C65/C75.

Belongs to the conotoxin O2 superfamily. In terms of tissue distribution, expressed by the venom duct.

The protein resides in the secreted. The protein is Conotoxin TsMEKL-P012 of Conus tessulatus (Tessellate cone).